A 918-amino-acid polypeptide reads, in one-letter code: E3 ubiquitin-protein ligase CBL-B-A (918 aa).

Residues 1-18 (MASGSGSSSSTSSSALSG) are compositionally biased toward low complexity. The segment at 1–27 (MASGSGSSSSTSSSALSGRLPGSRSAN) is disordered. The 4H stretch occupies residues 46 to 178 (PPKQAAADRR…KAIFPSGQFQ (133 aa)). The 309-residue stretch at 46 to 354 (PPKQAAADRR…GRSYNPDLTG (309 aa)) folds into the Cbl-PTB domain. The segment at 179-251 (GDNFRITKAD…FEFDIFTRLF (73 aa)) is EF-hand-like. Ca(2+)-binding residues include D232, T234, N236, Y238, and E243. An SH2-like region spans residues 252–354 (QPWGSILRNW…GRSYNPDLTG (103 aa)). R297 contributes to the 4-O-phospho-L-tyrosine binding site. The interval 355–383 (LCEPTPHDHIKVTQEQYELYCEMGSTFQL) is linker. The RING-type zinc-finger motif lies at 384-423 (CKICAENDKDVKIEPCGHLMCTSCLTSWQESDGQGCPFCR). 3 disordered regions span residues 481 to 582 (NERQ…RTCR), 780 to 831 (FPPA…PPAR), and 857 to 918 (HSDP…MRPT). Residues 483–497 (RQNSPVTSPGSSPLS) are compositionally biased toward polar residues. 2 stretches are compositionally biased toward pro residues: residues 554–576 (LPAP…PIPP) and 821–830 (PSQPPPPPPA). Over residues 898-918 (KASNTKGELLLPNQNLIMRPT) the composition is skewed to polar residues.

In terms of assembly, interacts with several SH3 domain-containing proteins and with poly-ubiquitinated proteins.

It localises to the cytoplasm. It carries out the reaction S-ubiquitinyl-[E2 ubiquitin-conjugating enzyme]-L-cysteine + [acceptor protein]-L-lysine = [E2 ubiquitin-conjugating enzyme]-L-cysteine + N(6)-ubiquitinyl-[acceptor protein]-L-lysine.. It functions in the pathway protein modification; protein ubiquitination. E3 ubiquitin-protein ligase which accepts ubiquitin from specific E2 ubiquitin-conjugating enzymes, and transfers it to substrates, generally promoting their degradation by the proteasome. The polypeptide is E3 ubiquitin-protein ligase CBL-B-A (cblb-a) (Xenopus laevis (African clawed frog)).